A 269-amino-acid polypeptide reads, in one-letter code: Tryptophan synthase alpha chain (269 aa).

Active-site proton acceptor residues include Glu49 and Asp60.

This sequence belongs to the TrpA family. As to quaternary structure, tetramer of two alpha and two beta chains.

The catalysed reaction is (1S,2R)-1-C-(indol-3-yl)glycerol 3-phosphate + L-serine = D-glyceraldehyde 3-phosphate + L-tryptophan + H2O. It functions in the pathway amino-acid biosynthesis; L-tryptophan biosynthesis; L-tryptophan from chorismate: step 5/5. Functionally, the alpha subunit is responsible for the aldol cleavage of indoleglycerol phosphate to indole and glyceraldehyde 3-phosphate. This is Tryptophan synthase alpha chain from Acidovorax ebreus (strain TPSY) (Diaphorobacter sp. (strain TPSY)).